We begin with the raw amino-acid sequence, 76 residues long: Large ribosomal subunit protein bL31 (76 aa).

Cys-16, Cys-18, Cys-37, and Cys-40 together coordinate Zn(2+).

The protein belongs to the bacterial ribosomal protein bL31 family. Type A subfamily. Part of the 50S ribosomal subunit. It depends on Zn(2+) as a cofactor.

Binds the 23S rRNA. The protein is Large ribosomal subunit protein bL31 of Maridesulfovibrio salexigens (strain ATCC 14822 / DSM 2638 / NCIMB 8403 / VKM B-1763) (Desulfovibrio salexigens).